Consider the following 115-residue polypeptide: U17-barytoxin-Tl1c (115 aa).

An N-terminal signal peptide occupies residues Met1 to Ala20. Positions Lys21–Arg74 are excised as a propeptide. 3 disulfides stabilise this stretch: Cys75–Cys89, Cys82–Cys94, and Cys88–Cys109.

Belongs to the neurotoxin 14 (magi-1) family. 03 (ICK-30-40) subfamily. Expressed by the venom gland.

The protein localises to the secreted. In terms of biological role, ion channel inhibitor. This chain is U17-barytoxin-Tl1c, found in Trittame loki (Brush-footed trapdoor spider).